The chain runs to 302 residues: MSLPDATVVKAFLLDLQHRICAGLEQLDGQASFAADSWTRAEGGGGTSRVLTQGAVFEQAGVNFSHVTGAAMPASATAHRPELAGRSFEAMGVSLVIHPKNPYIPTTHANVRFFIAHKDGAEPVWWFGGGFDLTPYYPFEEDVREWHQSAKNLCQPFGDDVYPKYKKWCDEYFFLPHRNETRGVGGLFFDDLNQAGFDKSFDFMQAVGNGFLTAYAPIVERRKDTDYGERERDFQLYRRGRYVEFNLVYDRGTLFGLQTGGRTESILMSMPPLVRWQYAYTPAAGSPEADLYDNYLKPRDWV.

Ser94 is a binding site for substrate. 2 residues coordinate a divalent metal cation: His98 and His108. The active-site Proton donor is His108. Position 110–112 (110–112 (NVR)) interacts with substrate. A divalent metal cation contacts are provided by His147 and His177. Residues 242-277 (YVEFNLVYDRGTLFGLQTGGRTESILMSMPPLVRWQ) form an important for dimerization region. 260-262 (GGR) is a binding site for substrate.

It belongs to the aerobic coproporphyrinogen-III oxidase family. In terms of assembly, homodimer. A divalent metal cation serves as cofactor.

It is found in the cytoplasm. The enzyme catalyses coproporphyrinogen III + O2 + 2 H(+) = protoporphyrinogen IX + 2 CO2 + 2 H2O. The protein operates within porphyrin-containing compound metabolism; protoporphyrin-IX biosynthesis; protoporphyrinogen-IX from coproporphyrinogen-III (O2 route): step 1/1. Its function is as follows. Involved in the heme biosynthesis. Catalyzes the aerobic oxidative decarboxylation of propionate groups of rings A and B of coproporphyrinogen-III to yield the vinyl groups in protoporphyrinogen-IX. This chain is Oxygen-dependent coproporphyrinogen-III oxidase, found in Shewanella oneidensis (strain ATCC 700550 / JCM 31522 / CIP 106686 / LMG 19005 / NCIMB 14063 / MR-1).